The following is a 530-amino-acid chain: Glucose-6-phosphate isomerase (530 aa).

Glu-322 functions as the Proton donor in the catalytic mechanism. Catalysis depends on residues His-351 and Lys-455.

Belongs to the GPI family.

Its subcellular location is the cytoplasm. The enzyme catalyses alpha-D-glucose 6-phosphate = beta-D-fructose 6-phosphate. It functions in the pathway carbohydrate biosynthesis; gluconeogenesis. It participates in carbohydrate degradation; glycolysis; D-glyceraldehyde 3-phosphate and glycerone phosphate from D-glucose: step 2/4. Catalyzes the reversible isomerization of glucose-6-phosphate to fructose-6-phosphate. The sequence is that of Glucose-6-phosphate isomerase from Geotalea daltonii (strain DSM 22248 / JCM 15807 / FRC-32) (Geobacter daltonii).